Here is a 276-residue protein sequence, read N- to C-terminus: uncharacterized protein (276 aa).

The AB hydrolase-1 domain maps to 20 to 137 (PVLIFIPGAN…PPINTFLPDS (118 aa)).

Belongs to the AB hydrolase superfamily.

This is an uncharacterized protein from Staphylococcus aureus (strain MRSA252).